A 325-amino-acid polypeptide reads, in one-letter code: Fructose-1,6-bisphosphatase class 1 (325 aa).

Residues E84, D103, L105, and D106 each contribute to the Mg(2+) site. Substrate is bound by residues 106-109, N196, and K262; that span reads DGSS. E268 lines the Mg(2+) pocket.

The protein belongs to the FBPase class 1 family. In terms of assembly, homotetramer. Mg(2+) serves as cofactor.

It localises to the cytoplasm. It catalyses the reaction beta-D-fructose 1,6-bisphosphate + H2O = beta-D-fructose 6-phosphate + phosphate. Its pathway is carbohydrate biosynthesis; gluconeogenesis. This is Fructose-1,6-bisphosphatase class 1 from Shewanella oneidensis (strain ATCC 700550 / JCM 31522 / CIP 106686 / LMG 19005 / NCIMB 14063 / MR-1).